The sequence spans 196 residues: Large ribosomal subunit protein uL5 (196 aa).

The protein belongs to the universal ribosomal protein uL5 family. As to quaternary structure, part of the 50S ribosomal subunit; part of the 5S rRNA/L5/L18/L25 subcomplex. Contacts the 5S rRNA and the P site tRNA. Forms a bridge to the 30S subunit in the 70S ribosome.

Its function is as follows. This is one of the proteins that bind and probably mediate the attachment of the 5S RNA into the large ribosomal subunit, where it forms part of the central protuberance. In the 70S ribosome it contacts protein S13 of the 30S subunit (bridge B1b), connecting the 2 subunits; this bridge is implicated in subunit movement. Contacts the P site tRNA; the 5S rRNA and some of its associated proteins might help stabilize positioning of ribosome-bound tRNAs. This is Large ribosomal subunit protein uL5 from Acidothermus cellulolyticus (strain ATCC 43068 / DSM 8971 / 11B).